We begin with the raw amino-acid sequence, 174 residues long: Ribosome maturation factor RimM (174 aa).

In terms of domain architecture, PRC barrel spans 91–164; the sequence is DDAWYPHQLQ…KVVLSPPGGL (74 aa).

The protein belongs to the RimM family. In terms of assembly, binds ribosomal protein uS19.

The protein localises to the cytoplasm. In terms of biological role, an accessory protein needed during the final step in the assembly of 30S ribosomal subunit, possibly for assembly of the head region. Essential for efficient processing of 16S rRNA. May be needed both before and after RbfA during the maturation of 16S rRNA. It has affinity for free ribosomal 30S subunits but not for 70S ribosomes. The chain is Ribosome maturation factor RimM from Kineococcus radiotolerans (strain ATCC BAA-149 / DSM 14245 / SRS30216).